Reading from the N-terminus, the 419-residue chain is Acetyl transferase GW6a (419 aa).

The N-acetyltransferase domain occupies 12 to 210 (VRVREFDVEK…GHPVHAHRLP (199 aa)). Residues 44-68 (VHDHADDGDGAAAKEKKKTKTKTKK) are disordered. Residues 58-68 (EKKKTKTKTKK) show a composition bias toward basic residues.

This sequence belongs to the acetyltransferase family. In terms of assembly, interacts (via C-terminus) with HDR3 (via N-terminus). In terms of processing, ubiquitinated at Lys-63 by HDR3. Polyubiquitination of GW6A delays its degradation by the 26S proteasome and enhances GW6A histone acetyltransferase activity. In terms of tissue distribution, expressed in roots, leaf blades, leaf sheaths, shoot apical meristem and young panicles.

It localises to the nucleus. Possesses intrinsic histone acetyltransferase activity and acts as a positive regulator of grain weight, hull size, yield, and plant biomass. Regulates postitively grain weight and yield by enlarging spikelet hulls via increasing cell number and accelerating grain filling. In vitro, catalyzes the acetylation of histone H4 at Lys-6 (H4K5ac), Lys-13 (H4K12ac) and Lys-17 (H4K16ac). Involved in the regulation of plastochron (the time interval between leaf initiation event). The sequence is that of Acetyl transferase GW6a from Oryza sativa subsp. japonica (Rice).